Here is a 313-residue protein sequence, read N- to C-terminus: Formimidoylglutamase (313 aa).

Mn(2+) is bound by residues H130, D155, H157, D159, D241, and D243.

It belongs to the arginase family. The cofactor is Mn(2+).

It carries out the reaction N-formimidoyl-L-glutamate + H2O = formamide + L-glutamate. It participates in amino-acid degradation; L-histidine degradation into L-glutamate; L-glutamate from N-formimidoyl-L-glutamate (hydrolase route): step 1/1. In terms of biological role, catalyzes the conversion of N-formimidoyl-L-glutamate to L-glutamate and formamide. The sequence is that of Formimidoylglutamase from Salmonella newport (strain SL254).